The chain runs to 384 residues: 5-cytosine rRNA methyltransferase NSUN4 (384 aa).

The transit peptide at 1–25 (MAALTLRGVRELLKRVDLATVPRRH) directs the protein to the mitochondrion. The S-adenosyl-L-methionine site is built by glycine 185, glycine 186, lysine 187, and aspartate 204. Serine 206 carries the post-translational modification Phosphoserine. Arginine 209, aspartate 237, glycine 238, and aspartate 255 together coordinate S-adenosyl-L-methionine. Cysteine 310 serves as the catalytic Nucleophile.

It belongs to the class I-like SAM-binding methyltransferase superfamily. RsmB/NOP family. In terms of assembly, heterodimer with MTERFD2/MTERF4; this interaction seems to be required for NSUN4 recruitment to the mitochondrial large ribosomal subunit.

The protein localises to the mitochondrion. It catalyses the reaction a cytidine in rRNA + S-adenosyl-L-methionine = a 5-methylcytidine in rRNA + S-adenosyl-L-homocysteine + H(+). It carries out the reaction a cytidine in mRNA + S-adenosyl-L-methionine = a 5-methylcytidine in mRNA + S-adenosyl-L-homocysteine + H(+). Functionally, mitochondrial RNA cytosine C(5)-methyltransferase that methylates cytosine to 5-methylcytosine (m5C) in various RNAs, such as rRNAs, mRNAs and some long non-coding RNAs (lncRNAs). Involved in mitochondrial ribosome small subunit (SSU) maturation by catalyzing methylation of mitochondrial 12S rRNA; the function is independent of MTERFD2/MTERF4 and assembled mitochondrial ribosome large subunit (LSU). Targeted to LSU by MTERFD2/MTERF4 and probably is involved in a final step in ribosome biogenesis to ensure that SSU and LSU are assembled. In vitro can methylate 16S rRNA of the LSU; the methylation is enhanced by MTERFD/MTERF4. Also acts as a regulator of innate immunity by marking double-stranded mitochondrial RNAs(mt-dsRNAs) generated in response to stress: catalyzes m5C modification on mitochondrial RNAs, such as a mRNAs and lncRNAs, with a preference for the termini of light-strand lncRNAs, promoting their degradation and cytosolic release. Modified light-strand lncRNAs are then recognized by C1QBP reader and recruited to the mitochondrial degradosome complex, which promotes their degradation. The polypeptide is 5-cytosine rRNA methyltransferase NSUN4 (Homo sapiens (Human)).